A 206-amino-acid chain; its full sequence is Thymidylate kinase (206 aa).

11–18 (GIDGAGKT) serves as a coordination point for ATP.

It belongs to the thymidylate kinase family.

The enzyme catalyses dTMP + ATP = dTDP + ADP. Its function is as follows. Phosphorylation of dTMP to form dTDP in both de novo and salvage pathways of dTTP synthesis. The polypeptide is Thymidylate kinase (Paraburkholderia xenovorans (strain LB400)).